A 299-amino-acid chain; its full sequence is Hemolysin C homolog (299 aa).

2 CBS domains span residues 80–142 (MVPR…NGRL) and 145–202 (LIRK…IDDE).

The protein belongs to the UPF0053 family. Hemolysin C subfamily.

This Rickettsia conorii (strain ATCC VR-613 / Malish 7) protein is Hemolysin C homolog (tlyC).